The following is a 117-amino-acid chain: Putative pterin-4-alpha-carbinolamine dehydratase (117 aa).

Belongs to the pterin-4-alpha-carbinolamine dehydratase family.

The enzyme catalyses (4aS,6R)-4a-hydroxy-L-erythro-5,6,7,8-tetrahydrobiopterin = (6R)-L-erythro-6,7-dihydrobiopterin + H2O. The polypeptide is Putative pterin-4-alpha-carbinolamine dehydratase (Aeromonas salmonicida (strain A449)).